A 430-amino-acid chain; its full sequence is Adenylosuccinate synthetase (430 aa).

Residues G12–K18 and G40–T42 contribute to the GTP site. The active-site Proton acceptor is the D13. Positions 13 and 40 each coordinate Mg(2+). Residues D13–K16, N38–H41, T130, R144, Q224, and T239 each bind IMP. Catalysis depends on H41, which acts as the Proton donor. A disordered region spans residues P277–F297. Positions E285–E296 are enriched in basic and acidic residues. T299–R305 serves as a coordination point for substrate. R303 lines the IMP pocket. Residues R305, K331–D333, and S413–S415 each bind GTP.

The protein belongs to the adenylosuccinate synthetase family. Homodimer. Mg(2+) is required as a cofactor.

The protein resides in the cytoplasm. The enzyme catalyses IMP + L-aspartate + GTP = N(6)-(1,2-dicarboxyethyl)-AMP + GDP + phosphate + 2 H(+). It participates in purine metabolism; AMP biosynthesis via de novo pathway; AMP from IMP: step 1/2. Its function is as follows. Plays an important role in the de novo pathway of purine nucleotide biosynthesis. Catalyzes the first committed step in the biosynthesis of AMP from IMP. The protein is Adenylosuccinate synthetase of Bradyrhizobium sp. (strain ORS 278).